The following is a 263-amino-acid chain: UPF0328 protein ECU08_2060 (263 aa).

This sequence belongs to the UPF0328 family.

The polypeptide is UPF0328 protein ECU08_2060 (Encephalitozoon cuniculi (strain GB-M1) (Microsporidian parasite)).